Here is a 503-residue protein sequence, read N- to C-terminus: Beta-amylase Tri a 17 (503 aa).

Residues Asp-51, His-91, and Asp-99 each contribute to the substrate site. Glu-184 acts as the Proton donor in catalysis. Residues Lys-293, His-298, and Thr-340 each coordinate substrate. Glu-378 acts as the Proton acceptor in catalysis. Substrate is bound by residues 379–380 (NA) and Arg-418.

The protein belongs to the glycosyl hydrolase 14 family.

The catalysed reaction is Hydrolysis of (1-&gt;4)-alpha-D-glucosidic linkages in polysaccharides so as to remove successive maltose units from the non-reducing ends of the chains.. The sequence is that of Beta-amylase Tri a 17 (BMY1) from Triticum aestivum (Wheat).